The sequence spans 173 residues: uncharacterized protein (173 aa).

The disordered stretch occupies residues 80-107 (HSATVKRTDSSHRLKSHVVDKRPRRSLD). Basic and acidic residues predominate over residues 85-107 (KRTDSSHRLKSHVVDKRPRRSLD).

This is an uncharacterized protein from Autographa californica nuclear polyhedrosis virus (AcMNPV).